A 392-amino-acid polypeptide reads, in one-letter code: uncharacterized protein (392 aa).

This sequence belongs to the mimivirus L17x/L18x family.

This is an uncharacterized protein from Acanthamoeba polyphaga (Amoeba).